An 847-amino-acid chain; its full sequence is B-cell receptor CD22 (847 aa).

A signal peptide spans 1–19 (MHLLGPWLLLLVLEYLAFS). Residues 20-138 (DSSKWVFEHP…MERIHLNVSE (119 aa)) enclose the Ig-like V-type domain. The Extracellular portion of the chain corresponds to 20–687 (DSSKWVFEHP…YYSPETIGRR (668 aa)). 3 disulfide bridges follow: cysteine 39-cysteine 167, cysteine 44-cysteine 102, and cysteine 161-cysteine 219. N-linked (GlcNAc...) asparagine glycosylation is found at asparagine 67, asparagine 101, and asparagine 112. Residue arginine 120 coordinates N-acetylneuraminate. N-linked (GlcNAc...) asparagine glycans are attached at residues asparagine 135, asparagine 164, and asparagine 231. 6 consecutive Ig-like C2-type domains span residues 143–235 (PHIQ…DTVQ), 242–326 (PKLE…VFLQ), 331–416 (PEPS…LDVQ), 419–500 (PKKV…VALN), 505–582 (PRDV…QTAS), and 593–676 (PRRL…STLT). 4 cysteine pairs are disulfide-bonded: cysteine 265–cysteine 309, cysteine 353–cysteine 396, cysteine 442–cysteine 484, and cysteine 529–cysteine 571. N-linked (GlcNAc...) asparagine glycans are attached at residues asparagine 363, asparagine 445, and asparagine 479. 2 N-linked (GlcNAc...) asparagine glycosylation sites follow: asparagine 574 and asparagine 634. Residues cysteine 616 and cysteine 659 are joined by a disulfide bond. A helical membrane pass occupies residues 688–706 (VAVGLGSCLAILILAICGL). Topologically, residues 707 to 847 (KLQRRWKRTQ…ENVDYVILKH (141 aa)) are cytoplasmic. Phosphoserine is present on residues serine 725, serine 726, and serine 729. 2 short sequence motifs (ITIM motif) span residues 760 to 765 (ISYTTL) and 794 to 799 (VTYSAL). Tyrosine 762 is modified (phosphotyrosine). Residues tyrosine 807, tyrosine 822, and tyrosine 842 each carry the phosphotyrosine modification. Short sequence motifs (ITIM motif) lie at residues 820-825 (IHYSEL) and 840-845 (VDYVIL).

It belongs to the immunoglobulin superfamily. SIGLEC (sialic acid binding Ig-like lectin) family. As to quaternary structure, predominantly monomer of isoform CD22-beta. Also found as heterodimer of isoform CD22-beta and a shorter isoform. Interacts with PTPN6/SHP-1, LYN, SYK, PIK3R1/PIK3R2 and PLCG1 upon phosphorylation. Interacts with GRB2, INPP5D and SHC1 upon phosphorylation. May form a complex with INPP5D/SHIP, GRB2 and SHC1. In terms of processing, phosphorylation of Tyr-762, Tyr-807 and Tyr-822 are involved in binding to SYK, GRB2 and SYK, respectively. Phosphorylation of Tyr-842 is involved in binding to SYK, PLCG2 and PIK3R1/PIK3R2. Post-translationally, phosphorylated on tyrosine residues by LYN. As to expression, B-lymphocytes.

The protein localises to the cell membrane. Most highly expressed siglec (sialic acid-binding immunoglobulin-like lectin) on B-cells that plays a role in various aspects of B-cell biology including differentiation, antigen presentation, and trafficking to bone marrow. Binds to alpha 2,6-linked sialic acid residues of surface molecules such as CD22 itself, CD45 and IgM in a cis configuration. Can also bind to ligands on other cells as an adhesion molecule in a trans configuration. Acts as an inhibitory coreceptor on the surface of B-cells and inhibits B-cell receptor induced signaling, characterized by inhibition of the calcium mobilization and cellular activation. Mechanistically, the immunoreceptor tyrosine-based inhibitory motif domain is phosphorylated by the Src kinase LYN, which in turn leads to the recruitment of the protein tyrosine phosphatase 1/PTPN6, leading to the negative regulation of BCR signaling. If this negative signaling from is of sufficient strength, apoptosis of the B-cell can be induced. The protein is B-cell receptor CD22 of Homo sapiens (Human).